Consider the following 158-residue polypeptide: Transcriptional repressor NrdR (158 aa).

A zinc finger spans residues 3-34; it reads CPSCQNTDSRVLESRAAEGGRSVRRRRECLNC. Positions 49-139 constitute an ATP-cone domain; that stretch reads ITVIKRNGHR…VYRHFRSVSD (91 aa).

The protein belongs to the NrdR family. The cofactor is Zn(2+).

Negatively regulates transcription of bacterial ribonucleotide reductase nrd genes and operons by binding to NrdR-boxes. The sequence is that of Transcriptional repressor NrdR from Synechococcus sp. (strain CC9311).